Consider the following 201-residue polypeptide: MQSSPLLENLMEALRVLPGVGPKSAQRMAYHLLQRNRSGGVNLAKALSEAMTHIGHCKSCRTFTEEDECAICQNYRRQISGQLCVVEMPADIQAIEQTGQFSGRYFVLMGHLSPLDGIGPREIGLDLLQKRLEEESFQEVILATNPTIEGDATANYIAEMCSIHNIKVTRIAHGIPVGSELEMVDGTSLSHSFVGRRDISL.

The segment at 57–72 (CKSCRTFTEEDECAIC) adopts a C4-type zinc-finger fold. One can recognise a Toprim domain in the interval 81–176 (GQLCVVEMPA…KVTRIAHGIP (96 aa)).

The protein belongs to the RecR family.

In terms of biological role, may play a role in DNA repair. It seems to be involved in an RecBC-independent recombinational process of DNA repair. It may act with RecF and RecO. The sequence is that of Recombination protein RecR from Glaesserella parasuis serovar 5 (strain SH0165) (Haemophilus parasuis).